The following is a 188-amino-acid chain: Probable nicotinate-nucleotide adenylyltransferase (188 aa).

It belongs to the NadD family.

It carries out the reaction nicotinate beta-D-ribonucleotide + ATP + H(+) = deamido-NAD(+) + diphosphate. The protein operates within cofactor biosynthesis; NAD(+) biosynthesis; deamido-NAD(+) from nicotinate D-ribonucleotide: step 1/1. Its function is as follows. Catalyzes the reversible adenylation of nicotinate mononucleotide (NaMN) to nicotinic acid adenine dinucleotide (NaAD). This chain is Probable nicotinate-nucleotide adenylyltransferase, found in Listeria monocytogenes serotype 4b (strain F2365).